Consider the following 891-residue polypeptide: Metabotropic glutamate receptor-like protein N (891 aa).

The Extracellular portion of the chain corresponds to 1-399 (MKLYTHKINR…FKPISKTIEY (399 aa)). 13 N-linked (GlcNAc...) asparagine glycosylation sites follow: Asn-52, Asn-85, Asn-88, Asn-125, Asn-132, Asn-224, Asn-298, Asn-312, Asn-320, Asn-325, Asn-353, Asn-363, and Asn-375. A disordered region spans residues 52-91 (NNSNSNSNNNNNNNNNNNNNNNNNNNNNNNNNNNNSNNSN). A helical transmembrane segment spans residues 400 to 420 (GITIVSSILIGALIIIQICII). Residues 421 to 433 (KYKNKPSFKSASP) lie on the Cytoplasmic side of the membrane. A helical membrane pass occupies residues 434–454 (TFLIFIVIGGIFVYIGVIIWV). The Extracellular portion of the chain corresponds to 455 to 461 (SGVNVFT). Residues 462-482 (CNAKFWLISLGLTTMIGGIVV) form a helical membrane-spanning segment. The Cytoplasmic portion of the chain corresponds to 483–505 (KNFRIWLIFDNPKLYHIKITNLQ). The chain crosses the membrane as a helical span at residues 506-526 (LLPWVLGMFLLNVFLLSLITG). Residues 527 to 555 (LGKLTPFKVFPNDEKFSSYEIQCEMMDGG) are Extracellular-facing. A helical membrane pass occupies residues 556–576 (LIALYFLLGYFAIIVMIGIFV). At 577-592 (SWKIRIVDIEEFNESK) the chain is on the cytoplasmic side. The helical transmembrane segment at 593 to 613 (SVAYSLYSIVFCLLIIAPLTI) threads the bilayer. Residues 614-625 (SKTGHNTEILCS) lie on the Extracellular side of the membrane. A helical transmembrane segment spans residues 626 to 646 (GFIFIVAAIITIMFIPKFWAL). Topologically, residues 647-891 (KIYGAEGSNE…SDSNSDSIIQ (245 aa)) are cytoplasmic. Disordered stretches follow at residues 660–689 (QSSS…KKSS), 742–827 (NEMT…ILTP), and 869–891 (DEVI…SIIQ). Residues 742–767 (NEMTYNDDPTYTEPSEQPTYTESSEQ) show a composition bias toward polar residues. Low complexity predominate over residues 772-782 (PRTLTATPRTN). The segment covering 783–820 (DLTTPRTNDLTTPRTNDLITPRTNDLSTPRTNDLNTPR) has biased composition (polar residues). Positions 872-881 (IENSDSESES) are enriched in acidic residues. A compositionally biased stretch (low complexity) spans 882 to 891 (SDSNSDSIIQ).

It belongs to the G-protein coupled receptor 3 family. GABA-B receptor subfamily.

The protein resides in the membrane. This Dictyostelium discoideum (Social amoeba) protein is Metabotropic glutamate receptor-like protein N (grlN).